We begin with the raw amino-acid sequence, 185 residues long: Ribonuclease HII (185 aa).

In terms of domain architecture, RNase H type-2 spans 1–185 (MKICGIDEAG…LKHLQGILEF (185 aa)). Positions 7, 8, and 96 each coordinate a divalent metal cation.

It belongs to the RNase HII family. Requires Mn(2+) as cofactor. It depends on Mg(2+) as a cofactor.

The protein localises to the cytoplasm. It carries out the reaction Endonucleolytic cleavage to 5'-phosphomonoester.. Functionally, endonuclease that specifically degrades the RNA of RNA-DNA hybrids. The polypeptide is Ribonuclease HII (Campylobacter hominis (strain ATCC BAA-381 / DSM 21671 / CCUG 45161 / LMG 19568 / NCTC 13146 / CH001A)).